We begin with the raw amino-acid sequence, 35 residues long: Kappa-theraphotoxin-Tb1a (35 aa).

Intrachain disulfides connect Cys3/Cys18, Cys10/Cys23, and Cys17/Cys30.

It belongs to the neurotoxin 10 (Hwtx-1) family. 59 (Tltx) subfamily. Monomer. Expressed by the venom gland.

The protein localises to the secreted. In terms of biological role, blocks Kv4.2/KCND2 voltage-gated potassium channels (IC(50) is 193.0 nM) by shifting the voltage-dependence of channel activation to more depolarized potentials. The toxin is thought to bind to the S3-S4 linker region of the voltage sensor domain. The polypeptide is Kappa-theraphotoxin-Tb1a (Theraphosa blondi (Goliath birdeating spider)).